The chain runs to 345 residues: Flap endonuclease 1 (345 aa).

Residues M1–R103 form an N-domain region. D34 is a Mg(2+) binding site. Positions 47 and 69 each coordinate DNA. Positions 85, 157, 159, 178, and 180 each coordinate Mg(2+). The tract at residues L121–H252 is I-domain. E157 is a binding site for DNA. Residues G230 and D232 each contribute to the DNA site. D232 lines the Mg(2+) pocket. The segment at T333–I341 is interaction with PCNA.

Belongs to the XPG/RAD2 endonuclease family. FEN1 subfamily. As to quaternary structure, interacts with PCNA. Three molecules of FEN1 bind to one PCNA trimer with each molecule binding to one PCNA monomer. PCNA stimulates the nuclease activity without altering cleavage specificity. Mg(2+) serves as cofactor. Phosphorylated. Phosphorylation upon DNA damage induces relocalization to the nuclear plasma.

The protein localises to the nucleus. It localises to the nucleolus. It is found in the nucleoplasm. Its subcellular location is the mitochondrion. In terms of biological role, structure-specific nuclease with 5'-flap endonuclease and 5'-3' exonuclease activities involved in DNA replication and repair. During DNA replication, cleaves the 5'-overhanging flap structure that is generated by displacement synthesis when DNA polymerase encounters the 5'-end of a downstream Okazaki fragment. It enters the flap from the 5'-end and then tracks to cleave the flap base, leaving a nick for ligation. Also involved in the long patch base excision repair (LP-BER) pathway, by cleaving within the apurinic/apyrimidinic (AP) site-terminated flap. Acts as a genome stabilization factor that prevents flaps from equilibrating into structures that lead to duplications and deletions. Also possesses 5'-3' exonuclease activity on nicked or gapped double-stranded DNA, and exhibits RNase H activity. Also involved in replication and repair of rDNA and in repairing mitochondrial DNA. This is Flap endonuclease 1 from Encephalitozoon cuniculi (strain GB-M1) (Microsporidian parasite).